The following is a 515-amino-acid chain: Probable multifunctional siroheme biosynthesis protein HemA (515 aa).

NAD(+) is bound by residues 26–27 and 47–48; these read SL and IR. The segment at 26–174 is glutamyl-tRNA reductase; sequence SLDYKSAAID…TAAKKAKTEI (149 aa). L-glutamyl-tRNA(Glu)-binding positions include 68 to 71, Ser-127, Glu-132, and Gln-138; that span reads TCNR. The active-site Nucleophile is Cys-69. Residue 206–211 participates in NADP(+) binding; it reads GNGEIG. The segment at 367 to 507 is precorrin-2 dehydrogenase /sirohydrochlorin ferrochelatase; that stretch reads FPLFIDLSGK…SLVKSVAEQI (141 aa).

It in the N-terminal section; belongs to the glutamyl-tRNA reductase family. This sequence in the C-terminal section; belongs to the precorrin-2 dehydrogenase / sirohydrochlorin ferrochelatase family. As to quaternary structure, homodimer.

It carries out the reaction (S)-4-amino-5-oxopentanoate + tRNA(Glu) + NADP(+) = L-glutamyl-tRNA(Glu) + NADPH + H(+). The enzyme catalyses precorrin-2 + NAD(+) = sirohydrochlorin + NADH + 2 H(+). It catalyses the reaction siroheme + 2 H(+) = sirohydrochlorin + Fe(2+). The protein operates within cofactor biosynthesis; adenosylcobalamin biosynthesis; sirohydrochlorin from precorrin-2: step 1/1. It functions in the pathway porphyrin-containing compound metabolism; siroheme biosynthesis; siroheme from sirohydrochlorin: step 1/1. It participates in porphyrin-containing compound metabolism; siroheme biosynthesis; sirohydrochlorin from precorrin-2: step 1/1. Its pathway is porphyrin-containing compound metabolism; protoporphyrin-IX biosynthesis; 5-aminolevulinate from L-glutamyl-tRNA(Glu): step 1/2. Its function is as follows. Multifunctional enzyme that catalyzes the NADPH-dependent reduction of glutamyl-tRNA(Glu) to glutamate 1-semialdehyde (GSA), the NAD-dependent ring dehydrogenation of precorrin-2 to sirohydrochlorin and finally, the ferrochelation of sirohydrochlorin to yield siroheme. The protein is Probable multifunctional siroheme biosynthesis protein HemA of Ruminiclostridium josui (Clostridium josui).